An 852-amino-acid chain; its full sequence is DNA repair protein rhp54 (852 aa).

2 consecutive short sequence motifs (nuclear localization signal) follow at residues 35-51 and 178-181; these read KKFK…RKEL and KRKK. A compositionally biased stretch (basic and acidic residues) spans 187-205; sequence NRKGKKEISDSEPESDHDS. The tract at residues 187–208 is disordered; the sequence is NRKGKKEISDSEPESDHDSCVS. Positions 281–459 constitute a Helicase ATP-binding domain; it reads GRIDRCANGC…FSLLNFANPG (179 aa). Residue 294-301 coordinates ATP; it reads DEMGLGKT. The DEGH box motif lies at 410-413; that stretch reads DEGH. The 154-residue stretch at 614-767 folds into the Helicase C-terminal domain; it reads VLERMLYQIK…CVVDEAQDVE (154 aa).

It belongs to the SNF2/RAD54 helicase family. In terms of assembly, homohexamer. Interacts with rhp51.

It is found in the nucleus. It catalyses the reaction ATP + H2O = ADP + phosphate + H(+). In terms of biological role, plays an essential role in homologous recombination (HR) which is a major pathway for repairing DNA double-strand breaks (DSBs), single-stranded DNA (ssDNA) gaps, and stalled or collapsed replication forks. Acts as a molecular motor during the homology search and guides RAD51 ssDNA along a donor dsDNA thereby changing the homology search from the diffusion-based mechanism to a motor-guided mechanism. Plays also an essential role in RAD51-mediated synaptic complex formation which consists of three strands encased in a protein filament formed once homology is recognized. Once DNA strand exchange occured, dissociates RAD51 from nucleoprotein filaments formed on dsDNA. In Schizosaccharomyces pombe (strain 972 / ATCC 24843) (Fission yeast), this protein is DNA repair protein rhp54 (rhp54).